Here is a 273-residue protein sequence, read N- to C-terminus: MDFLIVLKALMMGLVEGFTEFLPISSTGHLIVFGNLIGFHSNHKVFEIAIQLGAVLAVVFEYRQRFSNVLHGVGKDRKANRFVLNLAIAFIPAAVMGLLFDKQIKEYLFNPLSVAVMLVLGGFFILWVEKRQSRAEPKIADVDALRPIDALMIGVAQVFALVPGTSRSGSTVMGGMLWGIERKTATEFSFFLAVPMMVAATAYDVLKHYRFFTLHDVGLILIGFIAAFVSGLVAVKALLKFVSKKNYIPFAYYRIVFGIVIIILWLSGWISWE.

Helical transmembrane passes span 13–35, 45–62, 82–102, 108–128, 186–206, 219–239, and 250–270; these read GLVEGFTEFLPISSTGHLIVFGN, VFEIAIQLGAVLAVVFEY, FVLNLAIAFIPAAVMGLLFDK, LFNPLSVAVMLVLGGFFILWV, TEFSFFLAVPMMVAATAYDVL, LILIGFIAAFVSGLVAVKALL, and FAYYRIVFGIVIIILWLSGWI.

The protein belongs to the UppP family.

The protein resides in the cell inner membrane. It catalyses the reaction di-trans,octa-cis-undecaprenyl diphosphate + H2O = di-trans,octa-cis-undecaprenyl phosphate + phosphate + H(+). In terms of biological role, catalyzes the dephosphorylation of undecaprenyl diphosphate (UPP). Confers resistance to bacitracin. The chain is Undecaprenyl-diphosphatase from Neisseria gonorrhoeae (strain ATCC 700825 / FA 1090).